A 363-amino-acid chain; its full sequence is 5-hydroxytryptamine receptor 1E (363 aa).

Residues 1-21 (MNITNCTTEASMAIRPKTITE) lie on the Extracellular side of the membrane. N-linked (GlcNAc...) asparagine glycosylation is found at Asn-2 and Asn-5. The chain crosses the membrane as a helical span at residues 22 to 45 (KMLICMTLVVITTLTTLLNLAVIM). Residues 46-59 (AIGTTKKLHQPANY) lie on the Cytoplasmic side of the membrane. A helical transmembrane segment spans residues 60 to 84 (LICSLAVTDLLVAVLVMPLSIIYIV). At 85 to 92 (MDRWKLGY) the chain is on the extracellular side. A helical membrane pass occupies residues 93–118 (FLCEVWLSVDMTCCTCSILHLCVIAL). Cys-95 and Cys-173 are disulfide-bonded. Residues Asp-102 and Cys-106 each coordinate serotonin. The DRY motif; important for ligand-induced conformation changes signature appears at 119–121 (DRY). Over 119–138 (DRYWAITNAIEYARKRTAKR) the chain is Cytoplasmic. The chain crosses the membrane as a helical span at residues 139-157 (AALMILTVWTISIFISMPP). Over 158 to 179 (LFWRSHRRLSPPPSQCTIQHDH) the chain is Extracellular. Residues 180-203 (VIYTIYSTLGAFYIPLTLILILYY) traverse the membrane as a helical segment. Topologically, residues 204–291 (RIYHAAKSLY…SSTRERKAAR (88 aa)) are cytoplasmic. A helical transmembrane segment spans residues 292–316 (ILGLILGAFILSWLPFFIKELIVGL). Over 317-322 (SIYTVS) the chain is Extracellular. A helical membrane pass occupies residues 323-345 (SEVADFLTWLGYVNSLINPLLYT). The NPxxY motif; important for ligand-induced conformation changes and signaling signature appears at 340–344 (NPLLY). Residues 346–363 (SFNEDFKLAFKKLIRCRE) are Cytoplasmic-facing.

The protein belongs to the G-protein coupled receptor 1 family.

It is found in the cell membrane. G-protein coupled receptor for 5-hydroxytryptamine (serotonin). Also functions as a receptor for various alkaloids and psychoactive substances. Ligand binding causes a conformation change that triggers signaling via guanine nucleotide-binding proteins (G proteins) and modulates the activity of downstream effectors, such as adenylate cyclase. HTR1E is coupled to G(i)/G(o) G alpha proteins and mediates inhibitory neurotransmission by inhibiting adenylate cyclase activity. This chain is 5-hydroxytryptamine receptor 1E (HTR1E), found in Pan troglodytes (Chimpanzee).